Here is a 581-residue protein sequence, read N- to C-terminus: Membrane protein insertase YidC (581 aa).

A helical transmembrane segment spans residues 7–27 (ILIVALAVVSYLMVLQWNEDY). The disordered stretch occupies residues 41–62 (AATPALPDTPADTASTGGDDIP). The next 5 helical transmembrane spans lie at 365–385 (TVDY…LEVI), 388–408 (LLGN…LIFF), 458–478 (LGGC…YWVL), 489–509 (WMFW…PIIM), and 536–556 (PIIF…YWVV).

Belongs to the OXA1/ALB3/YidC family. Type 1 subfamily. As to quaternary structure, interacts with the Sec translocase complex via SecD. Specifically interacts with transmembrane segments of nascent integral membrane proteins during membrane integration.

It is found in the cell inner membrane. Required for the insertion and/or proper folding and/or complex formation of integral membrane proteins into the membrane. Involved in integration of membrane proteins that insert both dependently and independently of the Sec translocase complex, as well as at least some lipoproteins. Aids folding of multispanning membrane proteins. This is Membrane protein insertase YidC from Ectopseudomonas mendocina (strain ymp) (Pseudomonas mendocina).